Consider the following 1047-residue polypeptide: UPF0182 protein Mlut_14990 (1047 aa).

Gly residues-rich tracts occupy residues 1–27 (MSFG…GQSG) and 49–59 (GPGGPFGGGGS). Residues 1 to 66 (MSFGQGGGGP…GGSSAARGRG (66 aa)) are disordered. Helical transmembrane passes span 71 to 91 (PSAL…FVVF), 114 to 134 (VLAK…AVWL), 168 to 188 (LVFL…AMNG), 214 to 234 (FFMA…SVVL), 266 to 286 (AHIG…FWLN), 314 to 334 (AILA…VVSG), and 341 to 361 (IGTA…PFIV). Disordered stretches follow at residues 544–568 (GAPA…TFSG), 941–965 (GDSG…PTAP), and 1007–1047 (EALK…TPSG). The span at 555–565 (TADSQEDTAYT) shows a compositional bias: polar residues. The span at 1015–1037 (ADDALGGDAPAQEQAPAEASPAP) shows a compositional bias: low complexity. Residues 1038-1047 (SSSPSPTPSG) show a composition bias toward pro residues.

It belongs to the UPF0182 family.

The protein localises to the cell membrane. The polypeptide is UPF0182 protein Mlut_14990 (Micrococcus luteus (strain ATCC 4698 / DSM 20030 / JCM 1464 / CCM 169 / CCUG 5858 / IAM 1056 / NBRC 3333 / NCIMB 9278 / NCTC 2665 / VKM Ac-2230) (Micrococcus lysodeikticus)).